Here is a 244-residue protein sequence, read N- to C-terminus: U11/U12 small nuclear ribonucleoprotein 35 kDa protein (244 aa).

One can recognise an RRM domain in the interval L51–E129. The span at G146–F162 shows a compositional bias: basic and acidic residues. The interval G146 to K244 is disordered. K172 participates in a covalent cross-link: Glycyl lysine isopeptide (Lys-Gly) (interchain with G-Cter in SUMO2). Basic and acidic residues-rich tracts occupy residues N173 to E185 and R192 to K244.

In terms of assembly, component of the U11/U12 snRNPs that are part of the U12-type spliceosome.

The protein resides in the nucleus. This is U11/U12 small nuclear ribonucleoprotein 35 kDa protein (Snrnp35) from Rattus norvegicus (Rat).